A 139-amino-acid polypeptide reads, in one-letter code: Peptide methionine sulfoxide reductase MsrB (139 aa).

A MsrB domain is found at 8–130 (DREWQRELSP…NSASLQLKTQ (123 aa)). Positions 47, 50, 96, and 99 each coordinate Zn(2+). C119 serves as the catalytic Nucleophile.

It belongs to the MsrB Met sulfoxide reductase family. The cofactor is Zn(2+).

It catalyses the reaction L-methionyl-[protein] + [thioredoxin]-disulfide + H2O = L-methionyl-(R)-S-oxide-[protein] + [thioredoxin]-dithiol. This is Peptide methionine sulfoxide reductase MsrB from Acinetobacter baumannii (strain SDF).